An 829-amino-acid chain; its full sequence is Leucine--tRNA ligase (829 aa).

Positions 34-44 (PYPSGNIHMGH) match the 'HIGH' region motif. Positions 591–595 (KMSKS) match the 'KMSKS' region motif. Lys594 is an ATP binding site.

The protein belongs to the class-I aminoacyl-tRNA synthetase family.

It localises to the cytoplasm. The enzyme catalyses tRNA(Leu) + L-leucine + ATP = L-leucyl-tRNA(Leu) + AMP + diphosphate. This is Leucine--tRNA ligase from Ehrlichia canis (strain Jake).